Reading from the N-terminus, the 437-residue chain is MPATIAVTHLGCEKNRIDTEHMLGLLAQAGYQIDSDEDKAEYVLVNTCSFIGPARTESVRTLVNLAEQGKKIIIAGCLPQMFRDELLKEIPEAVAIVGTGDYHRIVEVVERSRTGERVSLVSATPTYIADEHLPRYRTTTEAVAYLKIAEGCDYRCAFCIIPHLRGDQRSRPIESIVAEAKQLASEGVKELILISQISTNYGLDLYGKPRLADLLRALGEVDIPWVRVHYAYPTGLTDELLTAVEQTANVLPYFDVPLQHSHPEVLRAMNRPWQADLNTRLLERIRERLPEATLRTTLIVGFPGESEAHFAHLCAFVERSEFDHVGVFAYSREENTAAANLEGQIPEAIKKRRRRDLMRLQQTISQRRNASQVGRVVPVLIEQENTQKKVWLGRSARFSPEIDGQVIVCGGAALNQLIPVRITAATPYDLCGEVFQA.

Positions 3 to 114 (ATIAVTHLGC…IVEVVERSRT (112 aa)) constitute an MTTase N-terminal domain. Residues cysteine 12, cysteine 48, cysteine 77, cysteine 152, cysteine 156, and cysteine 159 each contribute to the [4Fe-4S] cluster site. In terms of domain architecture, Radical SAM core spans 138 to 367 (TTTEAVAYLK…MRLQQTISQR (230 aa)). In terms of domain architecture, TRAM spans 370–436 (ASQVGRVVPV…PYDLCGEVFQ (67 aa)).

The protein belongs to the methylthiotransferase family. RimO subfamily. [4Fe-4S] cluster serves as cofactor.

It localises to the cytoplasm. It carries out the reaction L-aspartate(89)-[ribosomal protein uS12]-hydrogen + (sulfur carrier)-SH + AH2 + 2 S-adenosyl-L-methionine = 3-methylsulfanyl-L-aspartate(89)-[ribosomal protein uS12]-hydrogen + (sulfur carrier)-H + 5'-deoxyadenosine + L-methionine + A + S-adenosyl-L-homocysteine + 2 H(+). Catalyzes the methylthiolation of an aspartic acid residue of ribosomal protein uS12. In Gloeobacter violaceus (strain ATCC 29082 / PCC 7421), this protein is Ribosomal protein uS12 methylthiotransferase RimO.